The sequence spans 256 residues: Phosphonates import ATP-binding protein PhnC (256 aa).

The region spanning 5–253 (LRITGLVKEY…MLKTIYGGES (249 aa)) is the ABC transporter domain. 38 to 45 (GPSGTGKS) serves as a coordination point for ATP.

The protein belongs to the ABC transporter superfamily. Phosphonates importer (TC 3.A.1.9.1) family. The complex is composed of two ATP-binding proteins (PhnC), two transmembrane proteins (PhnE) and a solute-binding protein (PhnD).

Its subcellular location is the cell inner membrane. It carries out the reaction phosphonate(out) + ATP + H2O = phosphonate(in) + ADP + phosphate + H(+). In terms of biological role, part of the ABC transporter complex PhnCDE involved in phosphonates import. Responsible for energy coupling to the transport system. The protein is Phosphonates import ATP-binding protein PhnC of Bordetella parapertussis (strain 12822 / ATCC BAA-587 / NCTC 13253).